Reading from the N-terminus, the 244-residue chain is MDKSELVQKAKLSEQAERYDDMAASMKAVTELGAELSNEERNLLSVAYKNVVGARRSSWRVISSIEQKTEGNDKRQQMAREYREKVETELQDICKDVLDLLDRFLVPNATPPESKVFYLKMKGDYYRYLSEVASGDSKQETVANSQQAYQEAFEISKSEMQPTHPIRLGLALNFSVFYYEILNSPDKACSLAKSAFDEAIAELDTLNEESYKDSTLIMQLLRDNLTLWTSETQGEEADNVEGDN.

Position 1 is an N-acetylmethionine (methionine 1).

This sequence belongs to the 14-3-3 family. Homodimer, and heterodimer with other family members.

It is found in the cytoplasm. Its function is as follows. Adapter protein implicated in the regulation of a large spectrum of both general and specialized signaling pathways. Binds to a large number of partners, usually by recognition of a phosphoserine or phosphothreonine motif. Binding generally results in the modulation of the activity of the binding partner. In Xenopus laevis (African clawed frog), this protein is 14-3-3 protein beta/alpha-B (ywhab-b).